The sequence spans 304 residues: Sulfate adenylyltransferase subunit 2 (304 aa).

The protein belongs to the PAPS reductase family. CysD subfamily. As to quaternary structure, heterodimer composed of CysD, the smaller subunit, and CysN.

It carries out the reaction sulfate + ATP + H(+) = adenosine 5'-phosphosulfate + diphosphate. It participates in sulfur metabolism; hydrogen sulfide biosynthesis; sulfite from sulfate: step 1/3. Its function is as follows. With CysN forms the ATP sulfurylase (ATPS) that catalyzes the adenylation of sulfate producing adenosine 5'-phosphosulfate (APS) and diphosphate, the first enzymatic step in sulfur assimilation pathway. APS synthesis involves the formation of a high-energy phosphoric-sulfuric acid anhydride bond driven by GTP hydrolysis by CysN coupled to ATP hydrolysis by CysD. The chain is Sulfate adenylyltransferase subunit 2 from Acinetobacter baumannii (strain SDF).